Reading from the N-terminus, the 448-residue chain is Probable glucuronoxylan glucuronosyltransferase IRX7 (448 aa).

Over 1–16 (MTTHKHRRTEKNLCFK) the chain is Cytoplasmic. Residues 17 to 37 (QYYKWILCFILTLYFFASFFV) traverse the membrane as a helical; Signal-anchor for type II membrane protein segment. Residues 38 to 448 (DHDQDHRSST…RSVRRSNSFL (411 aa)) lie on the Lumenal side of the membrane. 5 N-linked (GlcNAc...) asparagine glycosylation sites follow: asparagine 157, asparagine 189, asparagine 287, asparagine 397, and asparagine 438.

Belongs to the glycosyltransferase 47 family. As to expression, expressed in developing interfascicular fibers and xylem cells in stems and developing secondary xylem in roots.

The protein resides in the golgi apparatus membrane. Its function is as follows. Involved in the synthesis of the hemicellulose glucuronoxylan, a major component of secondary cell walls. Probably involved in the synthesis of the glycosyl sequence at the glucuronoxylan reducing end. The polypeptide is Probable glucuronoxylan glucuronosyltransferase IRX7 (IRX7) (Arabidopsis thaliana (Mouse-ear cress)).